Consider the following 123-residue polypeptide: Acidic phospholipase A2 (123 aa).

7 disulfide bridges follow: Cys26/Cys116, Cys28/Cys44, Cys43/Cys95, Cys49/Cys123, Cys50/Cys88, Cys57/Cys81, and Cys75/Cys86. Residues Tyr27, Gly29, and Gly31 each coordinate Ca(2+). The active site involves His47. Asp48 provides a ligand contact to Ca(2+). The active site involves Asp89.

This sequence belongs to the phospholipase A2 family. Group II subfamily. D49 sub-subfamily. As to quaternary structure, homodimer. Ca(2+) is required as a cofactor. In terms of tissue distribution, expressed by the venom gland.

It is found in the secreted. It carries out the reaction a 1,2-diacyl-sn-glycero-3-phosphocholine + H2O = a 1-acyl-sn-glycero-3-phosphocholine + a fatty acid + H(+). Its function is as follows. Snake venom phospholipase A2 (PLA2) that inhibits ADP-induced platelet aggregation. PLA2 catalyzes the calcium-dependent hydrolysis of the 2-acyl groups in 3-sn-phosphoglycerides. This chain is Acidic phospholipase A2, found in Deinagkistrodon acutus (Hundred-pace snake).